Reading from the N-terminus, the 863-residue chain is Importin subunit beta-1 (863 aa).

19 HEAT repeats span residues 2–31, 33–62, 85–124, 129–159, 170–201, 212–248, 253–299, 314–360, 364–392, 399–439, 449–481, 496–530, 536–586, 592–630, 635–671, 677–715, 720–767, 778–815, and 822–861; these read NAGEFLAQTLSPDANVRLNAEKQLENAART, FAQYMVLLAQELANDNSMPYIRMAAGLALK, VEIKQQVKSLALQTLGSSEHQAGQSAAQLVAAIAAYELAT, DLMVTLVANVGEGQPSALKQHSLQTIGYICE, SNAILTAVVAGARKEEPDAAVRLAALGALYDS, EYERNYIMQVVCEATQSPEASIQTAAFGCLVKIMHLY, PFYM…EIQE, FARA…QVVG, VNPVLAFVEQNIQNPDWHQREAAVMAFGS, VAML…SSFV, LSPMVSALLQGLTDNPRIVANCCWAFMNLVCHF, YEAIIGSLLHVTDQKGNENNSRTSGYETLGTLITF, LPMI…IIRR, RTSSDQIMNLLLQTMQTAPKQSVVHEDVLLAIGAMMNSL, EVYVPSFVPFLSSALSNEQEYQLCSVAVGLVGDLARA, LPYCDDFMTRLVQDLQSSVLDRNVKPAILSCFSDIALAI, QTYL…ITQA, QPYVHSMFTLLNMITADPECSESLTRAALGLLGDLAES, and KSYFAADWVAALLNSGKTKISSQQTKDLARWATEQVKRQA. The Importin N-terminal domain occupies 21 to 101; it reads AEKQLENAAR…KSLALQTLGS (81 aa).

Belongs to the importin beta family. Importin beta-1 subfamily. In terms of assembly, forms a complex with an importin alpha subunit. Interacts with Ran; interacts specifically with the GTP-bound form of Ran (GTP-Ran), protecting it from GTP hydrolysis and nucleotide exchange. Interacts with nucleoporins.

The protein localises to the cytoplasm. The protein resides in the nucleus envelope. It is found in the nucleus. It localises to the nuclear pore complex. Importin beta subunit that functions in nuclear protein import through association with the importin alpha subunit, which binds to the clasical nuclear localization signal (cNLS) in cargo substrates. Docking of the importin/substrate complex to the nuclear pore complex (NPC) is mediated by importin beta through binding to nucleoporin FxFG repeats and the complex is subsequently translocated through the pore by an energy requiring, Ran-dependent mechanism. At the nucleoplasmic side of the NPC, GTP-Ran binds to importin beta and the three components separate, leading to release of the cargo. Importin alpha and beta are re-exported from the nucleus to the cytoplasm where GTP hydrolysis releases Ran from importin beta. The directionality of nuclear import is thought to be conferred by an asymmetric distribution of the GTP- and GDP-bound forms of Ran between the cytoplasm and nucleus. This is Importin subunit beta-1 from Schizosaccharomyces pombe (strain 972 / ATCC 24843) (Fission yeast).